A 201-amino-acid polypeptide reads, in one-letter code: Interferon-induced transmembrane protein 10 (201 aa).

Disordered regions lie at residues 1–23 (MAQGPSQCPALLGAPASTTDGTQ) and 60–88 (AAPAPEPSASPPMAPTLFPMESKSSKTDS). Residues 1-127 (MAQGPSQCPA…PDTTEVNDYY (127 aa)) lie on the Extracellular side of the membrane. The segment covering 63–73 (APEPSASPPMA) has biased composition (pro residues). A helical membrane pass occupies residues 128–148 (LWSIFNFVYLNFCCLGFIALA). S-palmitoyl cysteine attachment occurs at residues Cys-140 and Cys-141. Topologically, residues 149 to 173 (YSLKVRDKKLLNDLNGAVEDAKTAR) are cytoplasmic. The chain crosses the membrane as a helical span at residues 174 to 194 (LFNITSSALAASCIILIFIFL). Topologically, residues 195–201 (RYPLTDY) are extracellular.

The protein belongs to the CD225/Dispanin family.

It is found in the cell membrane. This is Interferon-induced transmembrane protein 10 (Ifitm10) from Mus musculus (Mouse).